Here is a 285-residue protein sequence, read N- to C-terminus: Probable endonuclease 4 (285 aa).

Zn(2+)-binding residues include histidine 69, histidine 109, glutamate 145, aspartate 179, histidine 182, histidine 216, aspartate 229, histidine 231, and glutamate 261.

This sequence belongs to the AP endonuclease 2 family. Requires Zn(2+) as cofactor.

It carries out the reaction Endonucleolytic cleavage to 5'-phosphooligonucleotide end-products.. Its function is as follows. Endonuclease IV plays a role in DNA repair. It cleaves phosphodiester bonds at apurinic or apyrimidinic (AP) sites, generating a 3'-hydroxyl group and a 5'-terminal sugar phosphate. This Salmonella paratyphi C (strain RKS4594) protein is Probable endonuclease 4.